A 664-amino-acid polypeptide reads, in one-letter code: MLGRLSLSAIPLDVPILVGTFIGVVIVGVAVLGLITYYGKWGYLWKEWFTSVDHKRLAAMYIILALVALFRGFADAIMMRTQLALAYAGNPGYLPPHHYDQIFSAHGTIMIFFLAMAFMTGLFNFIVPLQIGARDVAFPFLNNLSFWMTAVAFILVNVSLFIGEFSQCGWLAYPPLSENQFSPGVGVDYYIWAVQISGVGTLLTGVNFFVTIVKMRAPGMTWRKMPVFTWTALCASILIMVAFPVLTVAVGLLGMDRYFGMHFFTNDGGGNQMMYLNLIWAWGHPEVYILVIPAFGVFSEVVPAFSGKPLFGYSTMVYATCSIMVLSFLVWVHHFFTMGAGPDVNAFFGIATMIISIPTGIKLFNWLFTMYKGRIQFHACMYWAVGFMITFTIGGMTGVMLAIPGADFVLHNSLFLIAHFHNTIIGGVYFGYICGMNFWFPKVMGFKLDETWGKRAFWFWFVGFYCAFVPLYIVGFEGMTRRLNHYDNPAWHPWLLVAEVGAVLVMLGIACQLTQLYVSIRDRNLPQNRDVTGDPWNGRTLEWSTSSPPPVYNFAIVPHVHELDTFMLDKENGIDTRQAGAQYEAIHMPKNTSFGSGLCKCSALIFGFAAVWYIWWLAAVGLVGVIGTVIARSADKDIDYYIPAEEVARIENEHTRKLMAQAAE.

2 consecutive transmembrane segments (helical) span residues 15-35 (PILV…LGLI) and 57-77 (LAAM…ADAI). Histidine 106 contacts heme b. The next 12 membrane-spanning stretches (helical) occupy residues 109–129 (IMIF…IVPL), 136–156 (VAFP…FILV), 190–210 (YIWA…NFFV), 233–253 (LCAS…VGLL), 278–298 (LIWA…FGVF), 316–336 (MVYA…HHFF), 347–367 (FFGI…FNWL), 383–403 (WAVG…MLAI), 414–434 (LFLI…GYIC), 456–476 (AFWF…IVGF), 490–510 (AWHP…LGIA), and 603–623 (ALIF…VGLV). The Cu cation site is built by histidine 284, tyrosine 288, histidine 333, and histidine 334. The 1'-histidyl-3'-tyrosine (His-Tyr) cross-link spans 284–288 (HPEVY). Histidine 419 provides a ligand contact to Fe(II)-heme a. Position 421 (histidine 421) interacts with heme b.

This sequence belongs to the heme-copper respiratory oxidase family. As to quaternary structure, heterotetramer of the subunits 1, 2, 3 and 4.

It is found in the cell membrane. In terms of biological role, catalytic subunit of the enzyme. Electrons originating in a quinol are transferred to the bimetallic center formed by heme a and copper B. In Acetobacter aceti, this protein is Ubiquinol oxidase subunit 1 (cyaA).